Reading from the N-terminus, the 176-residue chain is O-acetyl-ADP-ribose deacetylase (176 aa).

In terms of domain architecture, Macro spans 1–175 (MSGRINVVQG…LYQRLLGQYD (175 aa)). Residues 11-12 (DI), asparagine 25, 33-35 (GVD), and 122-126 (STGIY) each bind substrate. Residue aspartate 35 is the Proton acceptor of the active site.

It belongs to the MacroD-type family. YmdB subfamily. As to quaternary structure, homodimer. Interacts with RNase III.

It carries out the reaction 3''-O-acetyl-ADP-D-ribose + H2O = ADP-D-ribose + acetate + H(+). It catalyses the reaction 2''-O-acetyl-ADP-D-ribose + H2O = ADP-D-ribose + acetate + H(+). Functionally, deacetylates O-acetyl-ADP ribose to yield ADP-ribose and free acetate. Down-regulates ribonuclease 3 (RNase III) activity. Acts by interacting directly with the region of the ribonuclease that is required for dimerization/activation. The polypeptide is O-acetyl-ADP-ribose deacetylase (Cronobacter turicensis (strain DSM 18703 / CCUG 55852 / LMG 23827 / z3032)).